Here is a 488-residue protein sequence, read N- to C-terminus: Fumarate hydratase (488 aa).

(S)-malate is bound by residues Ser105, Ser147, Asn148, Thr194, and His195. Residue His195 is the Proton donor/acceptor of the active site. Ser340 is an active-site residue. (S)-malate-binding residues include Ser341, Lys346, and Asn348.

This sequence belongs to the class-II fumarase/aspartase family. Fumarase subfamily. Homotetramer.

The protein resides in the cytoplasm. The protein localises to the cytosol. The catalysed reaction is (S)-malate = fumarate + H2O. Its function is as follows. Catalyzes the reversible stereospecific interconversion of fumarate to L-malate. Fumarate metabolism in the cytosol plays a role during urea cycle and arginine metabolism; fumarate being a by-product of the urea cycle and amino-acid catabolism. This is Fumarate hydratase from Schistosoma mansoni (Blood fluke).